The following is a 336-amino-acid chain: Large ribosomal subunit protein uL1m (336 aa).

The transit peptide at 1-50 (MAAAVRCLRRVLIHHQRHCLCKMASQASLYPCSVNSLLHNRHFAAAAAAA) directs the protein to the mitochondrion. S85 is modified (phosphoserine).

Belongs to the universal ribosomal protein uL1 family.

The protein localises to the mitochondrion. The protein is Large ribosomal subunit protein uL1m (Mrpl1) of Mus musculus (Mouse).